A 160-amino-acid polypeptide reads, in one-letter code: SsrA-binding protein (160 aa).

The tract at residues 136 to 160 (KRHVEKERDANREVQRAMRSKGKDD) is disordered.

Belongs to the SmpB family.

It localises to the cytoplasm. Required for rescue of stalled ribosomes mediated by trans-translation. Binds to transfer-messenger RNA (tmRNA), required for stable association of tmRNA with ribosomes. tmRNA and SmpB together mimic tRNA shape, replacing the anticodon stem-loop with SmpB. tmRNA is encoded by the ssrA gene; the 2 termini fold to resemble tRNA(Ala) and it encodes a 'tag peptide', a short internal open reading frame. During trans-translation Ala-aminoacylated tmRNA acts like a tRNA, entering the A-site of stalled ribosomes, displacing the stalled mRNA. The ribosome then switches to translate the ORF on the tmRNA; the nascent peptide is terminated with the 'tag peptide' encoded by the tmRNA and targeted for degradation. The ribosome is freed to recommence translation, which seems to be the essential function of trans-translation. This Ectopseudomonas mendocina (strain ymp) (Pseudomonas mendocina) protein is SsrA-binding protein.